The sequence spans 283 residues: 4-diphosphocytidyl-2-C-methyl-D-erythritol kinase (283 aa).

Residue K10 is part of the active site. 95–105 (PVAAGLGGGSS) is an ATP binding site. Residue D137 is part of the active site.

This sequence belongs to the GHMP kinase family. IspE subfamily.

It carries out the reaction 4-CDP-2-C-methyl-D-erythritol + ATP = 4-CDP-2-C-methyl-D-erythritol 2-phosphate + ADP + H(+). It functions in the pathway isoprenoid biosynthesis; isopentenyl diphosphate biosynthesis via DXP pathway; isopentenyl diphosphate from 1-deoxy-D-xylulose 5-phosphate: step 3/6. Catalyzes the phosphorylation of the position 2 hydroxy group of 4-diphosphocytidyl-2C-methyl-D-erythritol. This chain is 4-diphosphocytidyl-2-C-methyl-D-erythritol kinase, found in Pediococcus pentosaceus (strain ATCC 25745 / CCUG 21536 / LMG 10740 / 183-1w).